The sequence spans 467 residues: Syntaxin-5 (467 aa).

2 disordered regions span residues 1-53 and 58-77; these read MQTR…QSLV and GHEA…SIST. The Cytoplasmic portion of the chain corresponds to 1–445; the sequence is MQTRRRLHQT…KYFQSVSKNR (445 aa). Residues 10–22 show a composition bias toward low complexity; the sequence is TDQQDYSSSSTYT. A compositionally biased stretch (gly residues) spans 29-45; sequence GGAGAGSVGTGTAGGSV. The segment covering 68–77 has biased composition (polar residues); sequence NYQSGDSIST. Positions 245–269 form a coiled coil; the sequence is IKGDLNALNQQIARLQDISKDQRRH. The disordered stretch occupies residues 310 to 335; sequence QQKTRRDQFSQGPGPLAAHTVSPSTA. The t-SNARE coiled-coil homology domain occupies 375–437; it reads DNYVQQRAET…EAAHGEILKY (63 aa). The helical; Anchor for type IV membrane protein transmembrane segment at 446-466 threads the bilayer; that stretch reads WLMIKIFGVLIFFFLFFVVFM. Position 467 (serine 467) is a topological domain, vesicular.

Belongs to the syntaxin family. Homodimer.

The protein resides in the golgi apparatus. It is found in the cis-Golgi network membrane. Functionally, mediates endoplasmic reticulum to Golgi transport. The chain is Syntaxin-5 from Drosophila melanogaster (Fruit fly).